The following is a 156-amino-acid chain: 6,7-dimethyl-8-ribityllumazine synthase (156 aa).

5-amino-6-(D-ribitylamino)uracil contacts are provided by residues Phe-22, 56–58 (AME), and 80–82 (AVI). A (2S)-2-hydroxy-3-oxobutyl phosphate-binding site is contributed by 85–86 (ET). His-88 functions as the Proton donor in the catalytic mechanism. A 5-amino-6-(D-ribitylamino)uracil-binding site is contributed by Phe-113. Arg-127 serves as a coordination point for (2S)-2-hydroxy-3-oxobutyl phosphate.

The protein belongs to the DMRL synthase family.

It catalyses the reaction (2S)-2-hydroxy-3-oxobutyl phosphate + 5-amino-6-(D-ribitylamino)uracil = 6,7-dimethyl-8-(1-D-ribityl)lumazine + phosphate + 2 H2O + H(+). The protein operates within cofactor biosynthesis; riboflavin biosynthesis; riboflavin from 2-hydroxy-3-oxobutyl phosphate and 5-amino-6-(D-ribitylamino)uracil: step 1/2. Its function is as follows. Catalyzes the formation of 6,7-dimethyl-8-ribityllumazine by condensation of 5-amino-6-(D-ribitylamino)uracil with 3,4-dihydroxy-2-butanone 4-phosphate. This is the penultimate step in the biosynthesis of riboflavin. This is 6,7-dimethyl-8-ribityllumazine synthase from Kosmotoga olearia (strain ATCC BAA-1733 / DSM 21960 / TBF 19.5.1).